Consider the following 327-residue polypeptide: Tetraacyldisaccharide 4'-kinase (327 aa).

An ATP-binding site is contributed by 54 to 61; it reads TTGGTGKT. Positions 78-106 are disordered; sequence PHILSRGHGGRERGPIGVNPNRSTPRDVG.

Belongs to the LpxK family.

It carries out the reaction a lipid A disaccharide + ATP = a lipid IVA + ADP + H(+). Its pathway is glycolipid biosynthesis; lipid IV(A) biosynthesis; lipid IV(A) from (3R)-3-hydroxytetradecanoyl-[acyl-carrier-protein] and UDP-N-acetyl-alpha-D-glucosamine: step 6/6. Its function is as follows. Transfers the gamma-phosphate of ATP to the 4'-position of a tetraacyldisaccharide 1-phosphate intermediate (termed DS-1-P) to form tetraacyldisaccharide 1,4'-bis-phosphate (lipid IVA). This Gluconobacter oxydans (strain 621H) (Gluconobacter suboxydans) protein is Tetraacyldisaccharide 4'-kinase.